Here is a 102-residue protein sequence, read N- to C-terminus: Small ribosomal subunit protein eS24 (102 aa).

Positions 70–102 (VYDSPAQAAEVEHDHMLERNKIGADDADAEEAE) are disordered. The segment covering 79–93 (EVEHDHMLERNKIGA) has biased composition (basic and acidic residues).

This sequence belongs to the eukaryotic ribosomal protein eS24 family.

The protein is Small ribosomal subunit protein eS24 of Halobacterium salinarum (strain ATCC 29341 / DSM 671 / R1).